A 937-amino-acid polypeptide reads, in one-letter code: MNKSHLGTADNPQEVVTAHDIGRLVDVVNVGKGFLRYVGPIHGKDGMFCGIELLEPNGKHDGTFQGVSYFIATPYHGIFAPIFRVTLDAEELPKPPPPNPSNRLSRSALPALQLRNPLTQERKPEEDVMSTSVYVSSSTKPIAIPTKQCRPPETDPMQMSMFSDMMDGSMFSNGSWSDIADSMITSNCTFTVRKGLPIDDDGDLMSVPMVQSVFNIDREALRREEQLQSSIVLGESRIGVEHLPIIEDENELETPLVETRTMPLPNDLNANFSNKNSTTTFVEPETPKVEIRENGNLDNSIETPPQQSPSGSSMVSHESDSSSKKDDTKSDKSPTKKSQKMEEKPVVKKKEEPAAPPPPPKFPVKQKAPSKHQLMMEQLKASIEAEKTKPKKEIKSRVSLLPPPAPKAPQKENKEGGEMTETPRRTITKTPLKTVNAKAKTSPTPPVERQKKERKPLYVAPPAKERVEKEKKIPSKPVVSPPTTAEKKPVVSSIPSTSSASKGPFPTSSFAGGKLQGPRKTSSSSTTTSAKKQKNPPIDEKEKLSRLQHSTHAFEATLIVMNRINEDNERKLGNISEQYEKKVSELGDLKKMLDEARKKFEEDVEQMKNSNQQVIRNHANAVESLQKTHETQIAEKNKEFERNFEEERARREAEVCAMNNRHQKVVACLDEKISEAEKQCEQLNVDKKVLQAALANDCDHRNQMLTKEISSLQTALEMKSAEMKELRQKNQNLSLQVDEIPLKELEISKWKHKSNEYKQMLDQKINGEKILVQQIEDLRRKQIHDEEEKEAMKRSFDLMQFKYENGDDPNVTSVMSAPMESRFSTPTKVQFRSRSSASGSRPISMATSNGGDQRLSTSSHHDDSMNRSTISMYTSHIRLPENHADDVIYAPDEIISSRSGSISQRLAISIENDGEPTIKSESSRIGNTSDSGIGLVM.

The CAP-Gly domain maps to 39–81 (GPIHGKDGMFCGIELLEPNGKHDGTFQGVSYFIATPYHGIFAP). Disordered stretches follow at residues 90-131 (EELP…VMST) and 264-548 (LPND…SRLQ). Over residues 268 to 281 (LNANFSNKNSTTTF) the composition is skewed to polar residues. Residues 285 to 295 (ETPKVEIRENG) are compositionally biased toward basic and acidic residues. Positions 296 to 309 (NLDNSIETPPQQSP) are enriched in polar residues. 4 stretches are compositionally biased toward basic and acidic residues: residues 317–353 (HESDSSSKKDDTKSDKSPTKKSQKMEEKPVVKKKEEP), 383–396 (IEAEKTKPKKEIKS), 409–424 (PQKENKEGGEMTETPR), and 463–473 (AKERVEKEKKI). A compositionally biased stretch (low complexity) spans 492-501 (SSIPSTSSAS). Coiled coils occupy residues 566–740 (EDNE…VDEI) and 773–800 (QQIEDLRRKQIHDEEEKEAMKRSFDLMQ). Disordered stretches follow at residues 819 to 866 (MESR…DSMN) and 916 to 937 (PTIKSESSRIGNTSDSGIGLVM). The span at 832–844 (RSRSSASGSRPIS) shows a compositional bias: low complexity. Residues 845–858 (MATSNGGDQRLSTS) show a composition bias toward polar residues.

The sequence is that of CAP-Gly domain-containing linker protein 1 homolog from Caenorhabditis elegans.